The following is a 183-amino-acid chain: Ribosome-recycling factor (183 aa).

It belongs to the RRF family.

Its subcellular location is the cytoplasm. Responsible for the release of ribosomes from messenger RNA at the termination of protein biosynthesis. May increase the efficiency of translation by recycling ribosomes from one round of translation to another. This chain is Ribosome-recycling factor, found in Bifidobacterium longum subsp. infantis (strain ATCC 15697 / DSM 20088 / JCM 1222 / NCTC 11817 / S12).